The primary structure comprises 566 residues: Beta-1,2-xylosyltransferease XAX1 (566 aa).

The tract at residues 1–25 (MTSTAYSRPSKLPGGGNGSDRRLPP) is disordered. Topologically, residues 1 to 43 (MTSTAYSRPSKLPGGGNGSDRRLPPRLMRGLTTKIEPKKLGVG) are cytoplasmic. Residues 44–64 (LLAGCCLALLTYVSLAKLFAI) form a helical; Signal-anchor for type II membrane protein membrane-spanning segment. At 65-566 (YSPVFASTAN…LLQALDRLQQ (502 aa)) the chain is on the lumenal side. N-linked (GlcNAc...) asparagine glycosylation occurs at asparagine 74. A disordered region spans residues 78-180 (LMQNSPPSSP…AAGGDTKIKC (103 aa)). Positions 84 to 94 (PSSPETGPIPP) are enriched in pro residues. N-linked (GlcNAc...) asparagine glycosylation is found at asparagine 104, asparagine 368, asparagine 429, asparagine 515, and asparagine 549.

It belongs to the glycosyltransferase 61 family. Highly expressed in young panicles.

It localises to the golgi apparatus membrane. It functions in the pathway glycan metabolism. Its function is as follows. Glycosyltransferase involved in the xylosylation of xylan, the major hemicellulose (non-cellulosic component) of primary and secondary walls of angiosperms. Possesses beta-1,2-xylosyltransferase activity, transferring xylose from UDP-xylose to the xylan backbone. The chain is Beta-1,2-xylosyltransferease XAX1 from Oryza sativa subsp. japonica (Rice).